Consider the following 423-residue polypeptide: MTVKILVSGAGVAGTALVNFLCRSKHEYDITVVERAPALRAAGSQLDLKSFGAPLMRKLGLIEKVREKSIHETAFTFVDSKGREWARFPVNEAGKGYEGITSEFEIMRADLVAVLYEASKEVSANPFMKGPQKLRYVFGKHGVHFTQGNSKVNVVFSDGSSDDYDLVVGADGQYSMTRRLLWEPEKGSGDTTLKYTGVTAGFFQMPKSEDEADSTLFKNCLQAGPRGLCLRCAHKDFTQAMLGIPTTDEHKQVFKKPLEQQKQMWEESVGSFKWQGQRVLAELRKSDDFYMTPVAQVKVDRWSKGRVVLVGDAGYCPSVMTGRGTTVSLVGAYVLAGELAKHGDNIDAALESYEKVLRPFITTAQEIPSMGMGMFQSKFGVGVFYVLLAIISKLKIDRLLQALMKEEKETWELPEYPELEFEA.

FAD is bound by residues 10–13, 34–35, Arg108, Tyr290, and Asp312; these read AGVA and ER. The helical transmembrane segment at 371–391 threads the bilayer; sequence GMGMFQSKFGVGVFYVLLAII.

Belongs to the aromatic-ring hydroxylase family. It depends on FAD as a cofactor.

It localises to the membrane. It participates in secondary metabolite biosynthesis; terpenoid biosynthesis. In terms of biological role, FAD-dependent monooxygenase; part of the gene cluster that mediates the biosynthesis of xenovulene A, an unusual meroterpenoid that has potent inhibitory effects on the human gamma-aminobutyrate A (GABAA) benzodiazepine receptor. The first step of xenovulene A biosynthesis is the biosynthesis of 3-methylorcinaldehyde performed by the non-reducing polyketide synthase aspks1. The salicylate hydroxylase asL1 then catalyzes the oxidative dearomatization of 3-methylorcinaldehyde to yield a dearomatized hydroxycyclohexadione. The 2-oxoglutarate-dependent dioxygenase asL3 further catalyzes the oxidative ring expansion to provide the first tropolone metabolite. The cytochrome P450 monooxygenase asR2 allows the synthesis of tropolone hemiacetal. In parallel, a previously unrecognised class of terpene cyclase, asR6, produces alpha-humulene from farnesylpyrophosphate (FPP). The putative Diels-Alderase asR5 probably catalyzes the formation of the tropolone-humulene skeleton by linking humulene and the polyketide moiety. Oxidative-ring contractions catalyzed by asL4 and asL6 then processively remove carbon atoms from the polyketide to yield xenovulene A. The chain is FAD-dependent monooxygenase asL6 from Sarocladium schorii (Acremonium strictum (strain IMI 501407)).